The chain runs to 706 residues: Serotransferrin (706 aa).

The signal sequence occupies residues 1-19 (MRLAIRALLACAVLGLCLA). 2 Transferrin-like domains span residues 23–349 (VRWC…NLRE) and 363–691 (VKWC…NLRQ). 2 disulfides stabilise this stretch: Cys26/Cys64 and Cys36/Cys55. Arg40 carries the dimethylated arginine modification. Residues Asp79 and Tyr111 each coordinate Fe(3+). Cystine bridges form between Cys134–Cys215, Cys174–Cys190, Cys177–Cys198, Cys187–Cys200, and Cys248–Cys262. Thr136, Arg140, Ala142, and Gly143 together coordinate hydrogencarbonate. Tyr209 lines the Fe(3+) pocket. His270 serves as a coordination point for Fe(3+). 11 disulfides stabilise this stretch: Cys360-Cys623, Cys366-Cys398, Cys376-Cys389, Cys423-Cys701, Cys441-Cys664, Cys474-Cys550, Cys498-Cys692, Cys508-Cys522, Cys519-Cys533, Cys590-Cys604, and Cys642-Cys647. Ser391 bears the Phosphoserine mark. Fe(3+)-binding residues include Asp413 and Tyr449. Residues Thr476, Arg480, Ala482, and Gly483 each contribute to the hydrogencarbonate site. Asn515 carries an N-linked (GlcNAc...) asparagine glycan. Residue Tyr544 participates in Fe(3+) binding. Residue His612 participates in Fe(3+) binding. Ser693 is modified (phosphoserine).

It belongs to the transferrin family. As to quaternary structure, monomer. Part of a complex composed of SLC40A1/ferroportin, TF/transferrin and HEPH/hephaestin that transfers iron from cells to transferrin. Expressed by the liver and secreted in plasma.

It is found in the secreted. Its function is as follows. Transferrins are iron binding transport proteins which can bind two Fe(3+) ions in association with the binding of an anion, usually bicarbonate. It is responsible for the transport of iron from sites of absorption and heme degradation to those of storage and utilization. Serum transferrin may also have a further role in stimulating cell proliferation. This chain is Serotransferrin (TF), found in Equus caballus (Horse).